The sequence spans 506 residues: Acetylcholine receptor subunit gamma (506 aa).

An N-terminal signal peptide occupies residues 1-17 (MVLTLLLIICLALEVRS). At 18 to 235 (ENEEGRLIEK…IIFFLIIQRK (218 aa)) the chain is on the extracellular side. A glycan (N-linked (GlcNAc...) asparagine) is linked at Asn-85. Cys-145 and Cys-159 form a disulfide bridge. A run of 3 helical transmembrane segments spans residues 236 to 260 (PLFY…VYFL), 269 to 287 (CTLS…FLIA), and 303 to 324 (YLIF…VLNV). Over 325 to 466 (SLRTPNTHSL…WVLIGKVIDK (142 aa)) the chain is Cytoplasmic. Phosphotyrosine; by Tyr-kinases is present on Tyr-381. A helical membrane pass occupies residues 467 to 490 (ACFWIALLLFSIGTLAIFLTGHFN).

This sequence belongs to the ligand-gated ion channel (TC 1.A.9) family. Acetylcholine receptor (TC 1.A.9.1) subfamily. Gamma/CHRNG sub-subfamily. As to quaternary structure, pentamer of two alpha chains, and one each of the beta, delta, and gamma chains. Post-translationally, seems not to be glycosylated on Asn-158.

The protein localises to the postsynaptic cell membrane. The protein resides in the cell membrane. It catalyses the reaction K(+)(in) = K(+)(out). The enzyme catalyses Na(+)(in) = Na(+)(out). Functionally, after binding acetylcholine, the AChR responds by an extensive change in conformation that affects all subunits and leads to opening of an ion-conducting channel across the plasma membrane. This is Acetylcholine receptor subunit gamma (CHRNG) from Tetronarce californica (Pacific electric ray).